Here is a 287-residue protein sequence, read N- to C-terminus: Probable 3-hydroxybutyryl-CoA dehydrogenase (287 aa).

The protein belongs to the 3-hydroxyacyl-CoA dehydrogenase family.

The enzyme catalyses (3S)-3-hydroxybutanoyl-CoA + NADP(+) = acetoacetyl-CoA + NADPH + H(+). Its pathway is lipid metabolism; butanoate metabolism. The protein is Probable 3-hydroxybutyryl-CoA dehydrogenase (mmgB) of Bacillus subtilis (strain 168).